The primary structure comprises 349 residues: D-alanine--D-alanine ligase (349 aa).

In terms of domain architecture, ATP-grasp spans 132–335 (KHVFEAVGVP…YSDLIEKLVD (204 aa)). 162-217 (VEKLEFPVFVKPANMGSSVGISKVDDLADLQPALSEAYKYDNRVVIEQGVDAREIE) lines the ATP pocket. 3 residues coordinate Mg(2+): Asp-289, Glu-302, and Asn-304.

Belongs to the D-alanine--D-alanine ligase family. Mg(2+) is required as a cofactor. It depends on Mn(2+) as a cofactor.

The protein localises to the cytoplasm. The catalysed reaction is 2 D-alanine + ATP = D-alanyl-D-alanine + ADP + phosphate + H(+). The protein operates within cell wall biogenesis; peptidoglycan biosynthesis. Cell wall formation. This is D-alanine--D-alanine ligase from Lactococcus lactis subsp. cremoris (strain SK11).